An 89-amino-acid polypeptide reads, in one-letter code: Small ribosomal subunit protein uS15 (89 aa).

It belongs to the universal ribosomal protein uS15 family. Part of the 30S ribosomal subunit. Forms a bridge to the 50S subunit in the 70S ribosome, contacting the 23S rRNA.

Functionally, one of the primary rRNA binding proteins, it binds directly to 16S rRNA where it helps nucleate assembly of the platform of the 30S subunit by binding and bridging several RNA helices of the 16S rRNA. In terms of biological role, forms an intersubunit bridge (bridge B4) with the 23S rRNA of the 50S subunit in the ribosome. In Methylobacterium nodulans (strain LMG 21967 / CNCM I-2342 / ORS 2060), this protein is Small ribosomal subunit protein uS15.